The following is a 381-amino-acid chain: Phthiodiolone/phenolphthiodiolone dimycocerosates ketoreductase (381 aa).

The protein belongs to the mer family. Phthiodiolone/phenolphthiodiolone dimycocerosates ketoreductase subfamily.

Its function is as follows. Catalyzes the reduction of the keto moiety of phthiodiolone dimycocerosates (DIM B) and glycosylated phenolphthiodiolone dimycocerosates to form the intermediate compounds phthiotriol and glycosylated phenolphthiotriol dimycocerosates during phthiocerol dimycocerosates (DIM A) and glycosylated phenolphthiocerol dimycocerosates (PGL) biosynthesis. The polypeptide is Phthiodiolone/phenolphthiodiolone dimycocerosates ketoreductase (Mycobacterium bovis (strain ATCC BAA-935 / AF2122/97)).